The chain runs to 214 residues: Redox-sensing transcriptional repressor Rex (214 aa).

Residues 17–56 (LYYRIFKRFHADQVEKASSKQIADAMGIDSATVRRDFSYF) constitute a DNA-binding region (H-T-H motif). 91–96 (GCGNIG) lines the NAD(+) pocket.

It belongs to the transcriptional regulatory Rex family. In terms of assembly, homodimer.

It is found in the cytoplasm. Modulates transcription in response to changes in cellular NADH/NAD(+) redox state. The protein is Redox-sensing transcriptional repressor Rex of Streptococcus pyogenes serotype M1.